A 395-amino-acid polypeptide reads, in one-letter code: Serine-type anaerobic sulfatase-maturating enzyme (395 aa).

Residues 18–249 enclose the Radical SAM core domain; it reads PRSPVPFHIL…QWRKRCDRGR (232 aa). Residues Cys-35 and Cys-39 each coordinate [4Fe-4S] cluster. Tyr-41 provides a ligand contact to S-adenosyl-L-methionine. A [4Fe-4S] cluster-binding site is contributed by Cys-42. Gly-84 and Arg-152 together coordinate S-adenosyl-L-methionine. Residues Cys-270, Cys-276, and Cys-291 each coordinate [4Fe-4S] cluster. Asp-292 serves as the catalytic Proton acceptor. Positions 331, 334, 340, 344, and 357 each coordinate [4Fe-4S] cluster.

The protein belongs to the radical SAM superfamily. Anaerobic sulfatase-maturating enzyme family. In terms of assembly, monomer. Interacts with AtsA prior to its export to the periplasm. This interaction depends on the presence of AtsA 'Ser-72'. Binding of SAM to AtsB promotes the formation of a ternary AtsA-AtsB-SAM complex. [4Fe-4S] cluster is required as a cofactor.

Its subcellular location is the cytoplasm. It catalyses the reaction L-seryl-[sulfatase] + S-adenosyl-L-methionine = 3-oxo-L-alanyl-[sulfatase] + 5'-deoxyadenosine + L-methionine + H(+). Its pathway is protein modification; sulfatase oxidation. Activity is inhibited by iron chelators. Involved in 'Ser-type' sulfatase maturation under anaerobic conditions. Catalyzes the post-translational modification of serine ('Ser-72' in the arylsulfatase AtsA) into 3-oxoalanine (also known as C(alpha)-formylglycine (FGly)), by a free radical chemical mechanism initiated via the reductive cleavage of S-adenosyl-L-methionine (SAM). Is capable of catalyzing multiple turnovers. In vitro, use of a peptide substrate in which the target serine is changed to cysteine also gives rise to turnover, supporting approximately 4-fold the activity of that observed with the natural substrate. This is Serine-type anaerobic sulfatase-maturating enzyme from Klebsiella pneumoniae.